A 180-amino-acid polypeptide reads, in one-letter code: Crossover junction endodeoxyribonuclease RuvC (180 aa).

Active-site residues include D7, E66, and D138. D7, E66, and D138 together coordinate Mg(2+).

The protein belongs to the RuvC family. As to quaternary structure, homodimer which binds Holliday junction (HJ) DNA. The HJ becomes 2-fold symmetrical on binding to RuvC with unstacked arms; it has a different conformation from HJ DNA in complex with RuvA. In the full resolvosome a probable DNA-RuvA(4)-RuvB(12)-RuvC(2) complex forms which resolves the HJ. Requires Mg(2+) as cofactor.

The protein resides in the cytoplasm. It catalyses the reaction Endonucleolytic cleavage at a junction such as a reciprocal single-stranded crossover between two homologous DNA duplexes (Holliday junction).. Its function is as follows. The RuvA-RuvB-RuvC complex processes Holliday junction (HJ) DNA during genetic recombination and DNA repair. Endonuclease that resolves HJ intermediates. Cleaves cruciform DNA by making single-stranded nicks across the HJ at symmetrical positions within the homologous arms, yielding a 5'-phosphate and a 3'-hydroxyl group; requires a central core of homology in the junction. The consensus cleavage sequence is 5'-(A/T)TT(C/G)-3'. Cleavage occurs on the 3'-side of the TT dinucleotide at the point of strand exchange. HJ branch migration catalyzed by RuvA-RuvB allows RuvC to scan DNA until it finds its consensus sequence, where it cleaves and resolves the cruciform DNA. The sequence is that of Crossover junction endodeoxyribonuclease RuvC from Burkholderia lata (strain ATCC 17760 / DSM 23089 / LMG 22485 / NCIMB 9086 / R18194 / 383).